Here is a 373-residue protein sequence, read N- to C-terminus: tRNA-specific 2-thiouridylase MnmA (373 aa).

ATP-binding positions include G12–S19 and M38. An interaction with target base in tRNA region spans residues N98–D100. The active-site Nucleophile is C103. C103 and C200 are oxidised to a cystine. G127 is a binding site for ATP. The tract at residues K150 to Q152 is interaction with tRNA. C200 serves as the catalytic Cysteine persulfide intermediate. The segment at R312–Y313 is interaction with tRNA.

It belongs to the MnmA/TRMU family.

The protein localises to the cytoplasm. It catalyses the reaction S-sulfanyl-L-cysteinyl-[protein] + uridine(34) in tRNA + AH2 + ATP = 2-thiouridine(34) in tRNA + L-cysteinyl-[protein] + A + AMP + diphosphate + H(+). Catalyzes the 2-thiolation of uridine at the wobble position (U34) of tRNA, leading to the formation of s(2)U34. The protein is tRNA-specific 2-thiouridylase MnmA of Streptococcus pyogenes serotype M28 (strain MGAS6180).